A 132-amino-acid chain; its full sequence is Small ribosomal subunit protein uS8 (132 aa).

This sequence belongs to the universal ribosomal protein uS8 family. As to quaternary structure, part of the 30S ribosomal subunit. Contacts proteins S5 and S12.

In terms of biological role, one of the primary rRNA binding proteins, it binds directly to 16S rRNA central domain where it helps coordinate assembly of the platform of the 30S subunit. This Lactococcus lactis subsp. cremoris (strain MG1363) protein is Small ribosomal subunit protein uS8.